Here is a 375-residue protein sequence, read N- to C-terminus: MNMAERAEATKSWSCEPLSGKTLEEIVQNAENAADLVAYIRKPEVDLDFRLKFIAEHEEFFNVQLSDRNSRIRTCHNLSDKGIRGDTVFVFVPGLAGNLEQFEPLLELVDSDQKAFLTLDLPGFGHSSEWSDYPMLKVVELIFVLVCDVLRKWSTAVPNNDNVNPFNGHKIVLVGHSMGCFLACHLYEQHMADTKAVQTLVLLTPPKAHIEQLSKDKHIIQWALYGVFKLPWLFDVYRNKFDQVKGLQSSGIKQYFYQQGDDVKLKYRKFWQFKNNISNKSRTIIGYLLGWETVDWVKFNGVLTQTDMKQKIIIFGAEKDPIAPIENLEFYKQTINKECLRKVIILPDCSHNLCFDRPELVCENFQREVIDNSKL.

One can recognise an AB hydrolase-1 domain in the interval 88–358; that stretch reads VFVFVPGLAG…CSHNLCFDRP (271 aa). Catalysis depends on serine 177, which acts as the Charge relay system. The Microbody targeting signal motif lies at 373-375; the sequence is SKL.

It belongs to the AB hydrolase superfamily. Lipase family.

The protein resides in the lipid droplet. The catalysed reaction is a triacylglycerol + H2O = a diacylglycerol + a fatty acid + H(+). Functionally, serine hydrolase required for the maintenance of steady state level of non-polar and polar lipids of lipid droplets and thus plays a role in maintaining the lipids homeostasis. Exhibits both esterase and triacylglycerol lipase activity. This is Lipid droplet hydrolase 1 from Saccharomyces cerevisiae (strain ATCC 204508 / S288c) (Baker's yeast).